A 264-amino-acid polypeptide reads, in one-letter code: MEGKVYIGGEDYEKEFTPKDYLTTYYSFHSGPVAEQEIVKFSLQNLYQTFSTGGVGGDVLIDIGSGPTIYQLLSACEVFREIIVTDYTPQNLQELQKWLKKEPGAYDWSSIVQHACELEGDRSRWQEKEAKLRRTVTRVLRCDVTKTPPLGSAQVPLADCVLTFLAMECACPDIDTYRAALRRLAGLLKPGGHLVTLVTLRFQHYMVGPKKFSGVYLEKEVVEKAIQDAGCQVLKCNCVSLSYSEAYCSHDGLCFVVARKGPSA.

Lys-14 bears the N6-succinyllysine mark. Residues Tyr-21, Tyr-26, 64–65 (GS), Tyr-70, Asp-86, and Asn-91 each bind S-adenosyl-L-methionine. N6-succinyllysine is present on Lys-97. S-adenosyl-L-methionine is bound by residues 143–144 (DV) and Phe-164.

Belongs to the class I-like SAM-binding methyltransferase superfamily. NNMT/PNMT/TEMT family. In terms of assembly, monomer. As to expression, detected in lung and liver (at protein level).

The protein localises to the cytoplasm. The enzyme catalyses a tertiary amine + S-adenosyl-L-methionine = a methylated tertiary amine + S-adenosyl-L-homocysteine + H(+). It carries out the reaction a secondary amine + S-adenosyl-L-methionine = a methylated secondary amine + S-adenosyl-L-homocysteine + H(+). It catalyses the reaction a primary amine + S-adenosyl-L-methionine = a methylated primary amine + S-adenosyl-L-homocysteine + H(+). The catalysed reaction is dimethyl sulfide + S-adenosyl-L-methionine = trimethylsulfonium + S-adenosyl-L-homocysteine. Inhibited by the S-adenosyl-L-methionine analog sinefungin and by the product S-adenosyl-L-homocysteine. Catalyzes the N-methylation of tryptamine and structurally related compounds. Functions as a thioether S-methyltransferase and is active with a variety of thioethers and the corresponding selenium and tellurium compounds, including 3-methylthiopropionaldehyde, dimethyl selenide, dimethyl telluride, 2-methylthioethylamine, 2-methylthioethanol, methyl-n-propyl sulfide and diethyl sulfide. Plays an important role in the detoxification of selenium compounds. This Mus musculus (Mouse) protein is Indolethylamine N-methyltransferase (Inmt).